Here is a 441-residue protein sequence, read N- to C-terminus: Polyketide methyltransferase ustM (441 aa).

Residues 266–368 (LEVGAGLGGT…VRKLLRGGGF (103 aa)) form a methyltransferase (CMeT) domain region.

The protein belongs to the methyltransferase superfamily.

The protein operates within secondary metabolite biosynthesis. Polyketide methyltransferase; part of the gene cluster that mediates the biosynthesis of ustilaginoidins, dimeric gamma-naphthopyrones isolated from different fungal species. The first step in the biosynthesis of ustilaginoidins is the production of gamma-naphthopyrone precursor YWA1 by the non-reducing polyketide synthase ustP, via condensation of one acetyl-CoA starter unit with 6 malonyl-CoA units. YWA1 is then probably substrate of the ustZ to yield norrubrofusarin via a dehydration reaction. A key enzyme in the biosynthetic pathway is the laccase ustL, which catalyzes the oxidative dimerization of norrubrofusarin to ustilaginoidin A. It can produce the M- and P-atropisomers in varying amounts, depending on the reaction conditions. For the biosynthesis of 3-methylustilaginoid in derivatives such as chaetochromin A, a methylated derivative of YWA1 is required. The C-methylation is considered to be catalyzed by ustM, the phosphopantetheine attachment site of which indicates that it acts on the growing polyketide chain before release of the product. For the biosynthesis of chaetochromin A, it is assumed that saturation of the D2 double bond takes place before dimerization, and is probably catalyzed by an external reductase because no candidate gene was identified within the cluster. This Ustilaginoidea virens (Rice false smut fungus) protein is Polyketide methyltransferase ustM.